The sequence spans 394 residues: ATP-dependent RNA helicase fal1 (394 aa).

A Q motif motif is present at residues 21–49 (SSFEEMNLKEDLLRGIYAYGYETPSAVQS). In terms of domain architecture, Helicase ATP-binding spans 52–222 (IIQICKGRDV…NKFTTNPVRI (171 aa)). 65 to 72 (AQSGTGKT) serves as a coordination point for ATP. S67 bears the Phosphoserine mark. A DEAD box motif is present at residues 170 to 173 (DEAD). The region spanning 233–394 (GLKQYFIAVE…EMPMNIGDMV (162 aa)) is the Helicase C-terminal domain.

Belongs to the DEAD box helicase family. DDX48/FAL1 subfamily.

Its subcellular location is the nucleus. It localises to the nucleolus. The enzyme catalyses ATP + H2O = ADP + phosphate + H(+). Its function is as follows. ATP-dependent RNA helicase involved in 40S ribosomal subunit biogenesis. Required for the processing and cleavage of 35S pre-rRNA at sites A0, A1, and A2, leading to mature 18S rRNA. This is ATP-dependent RNA helicase fal1 (tif412) from Schizosaccharomyces pombe (strain 972 / ATCC 24843) (Fission yeast).